We begin with the raw amino-acid sequence, 336 residues long: Holliday junction branch migration complex subunit RuvB (336 aa).

The interval 1–181 is large ATPase domain (RuvB-L); that stretch reads MDRIVEIEKF…FGMQFRLEFY (181 aa). ATP contacts are provided by residues Leu-20, Arg-21, Gly-62, Lys-65, Thr-66, Thr-67, 128–130, Arg-171, Tyr-181, and Arg-218; that span reads EDF. Thr-66 serves as a coordination point for Mg(2+). The tract at residues 182 to 252 is small ATPAse domain (RuvB-S); that stretch reads KNEELAIILE…RAKEALDSLG (71 aa). Residues 255-336 are head domain (RuvB-H); the sequence is ELGFDAMDLR…KYNKGLFDEK (82 aa). 2 residues coordinate DNA: Arg-309 and Arg-314.

This sequence belongs to the RuvB family. In terms of assembly, homohexamer. Forms an RuvA(8)-RuvB(12)-Holliday junction (HJ) complex. HJ DNA is sandwiched between 2 RuvA tetramers; dsDNA enters through RuvA and exits via RuvB. An RuvB hexamer assembles on each DNA strand where it exits the tetramer. Each RuvB hexamer is contacted by two RuvA subunits (via domain III) on 2 adjacent RuvB subunits; this complex drives branch migration. In the full resolvosome a probable DNA-RuvA(4)-RuvB(12)-RuvC(2) complex forms which resolves the HJ.

It localises to the cytoplasm. It catalyses the reaction ATP + H2O = ADP + phosphate + H(+). Functionally, the RuvA-RuvB-RuvC complex processes Holliday junction (HJ) DNA during genetic recombination and DNA repair, while the RuvA-RuvB complex plays an important role in the rescue of blocked DNA replication forks via replication fork reversal (RFR). RuvA specifically binds to HJ cruciform DNA, conferring on it an open structure. The RuvB hexamer acts as an ATP-dependent pump, pulling dsDNA into and through the RuvAB complex. RuvB forms 2 homohexamers on either side of HJ DNA bound by 1 or 2 RuvA tetramers; 4 subunits per hexamer contact DNA at a time. Coordinated motions by a converter formed by DNA-disengaged RuvB subunits stimulates ATP hydrolysis and nucleotide exchange. Immobilization of the converter enables RuvB to convert the ATP-contained energy into a lever motion, pulling 2 nucleotides of DNA out of the RuvA tetramer per ATP hydrolyzed, thus driving DNA branch migration. The RuvB motors rotate together with the DNA substrate, which together with the progressing nucleotide cycle form the mechanistic basis for DNA recombination by continuous HJ branch migration. Branch migration allows RuvC to scan DNA until it finds its consensus sequence, where it cleaves and resolves cruciform DNA. The sequence is that of Holliday junction branch migration complex subunit RuvB from Campylobacter lari (strain RM2100 / D67 / ATCC BAA-1060).